Reading from the N-terminus, the 206-residue chain is Small ribosomal subunit protein uS4 (206 aa).

In terms of domain architecture, S4 RNA-binding spans 96 to 157; sequence SRLDNVVYRM…KAKKQVRIQE (62 aa).

The protein belongs to the universal ribosomal protein uS4 family. Part of the 30S ribosomal subunit. Contacts protein S5. The interaction surface between S4 and S5 is involved in control of translational fidelity.

Functionally, one of the primary rRNA binding proteins, it binds directly to 16S rRNA where it nucleates assembly of the body of the 30S subunit. With S5 and S12 plays an important role in translational accuracy. This is Small ribosomal subunit protein uS4 from Neisseria gonorrhoeae (strain ATCC 700825 / FA 1090).